The sequence spans 140 residues: Large ribosomal subunit protein uL11 (140 aa).

The protein belongs to the universal ribosomal protein uL11 family. In terms of assembly, part of the ribosomal stalk of the 50S ribosomal subunit. Interacts with L10 and the large rRNA to form the base of the stalk. L10 forms an elongated spine to which L12 dimers bind in a sequential fashion forming a multimeric L10(L12)X complex. Post-translationally, one or more lysine residues are methylated.

Functionally, forms part of the ribosomal stalk which helps the ribosome interact with GTP-bound translation factors. In Gemmatimonas aurantiaca (strain DSM 14586 / JCM 11422 / NBRC 100505 / T-27), this protein is Large ribosomal subunit protein uL11.